We begin with the raw amino-acid sequence, 77 residues long: MQKLTILLLVAAVLMSTQALIKGGGEKRPKEKIRFLSKRKTTAERWWEGECRGWSNGCTTNSDCCSNNCDGTFCKLW.

The N-terminal stretch at methionine 1–alanine 19 is a signal peptide. The propeptide occupies leucine 20–serine 37. Disulfide bonds link cysteine 51–cysteine 65, cysteine 58–cysteine 69, and cysteine 64–cysteine 74.

The protein belongs to the conotoxin O2 superfamily. As to expression, expressed by the venom duct.

The protein resides in the secreted. This is Conotoxin VnMEKL-023 from Conus ventricosus (Mediterranean cone).